We begin with the raw amino-acid sequence, 69 residues long: Peptide Hact-1 (69 aa).

The signal sequence occupies residues 1-21 (MDRKFHLCLLLVILGTIIVQG). A propeptide spanning residues 22–57 (APLENENDADPDKPQKYRYYLKRATTEKKDNDPAKP) is cleaved from the precursor. Cysteine 59 and cysteine 68 are oxidised to a cystine.

Tentacle (ecto and/or endoderm tissue), and possibly also nematoblasts.

It localises to the secreted. The protein localises to the nematocyst. Its function is as follows. Peptide with unknown function. Has a limited effect on human peripheral blood mononuclear cells. Does not show activity against both Gram-positive and Gram-negative bacteria nor is it active on the 26 voltage-gated ion channels tested. This Heliofungia actiniformis (Mushroom coral) protein is Peptide Hact-1.